We begin with the raw amino-acid sequence, 533 residues long: Beta-glucosidase 22 (533 aa).

Residues 1 to 24 form the signal peptide; it reads MAVSSSTSTCSSFSLLLLLLLLAA. N-linked (GlcNAc...) asparagine glycosylation occurs at N41. A beta-D-glucoside is bound by residues Q61, H161, and 206–207; that span reads DE. E207 functions as the Proton donor in the catalytic mechanism. Residues C226 and C234 are joined by a disulfide bond. N-linked (GlcNAc...) asparagine glycans are attached at residues N233 and N238. Y350 and E421 together coordinate a beta-D-glucoside. E421 acts as the Nucleophile in catalysis. N-linked (GlcNAc...) asparagine glycosylation occurs at N435. Residues W466 and F482 each contribute to the a beta-D-glucoside site.

Belongs to the glycosyl hydrolase 1 family.

It catalyses the reaction Hydrolysis of terminal, non-reducing beta-D-glucosyl residues with release of beta-D-glucose.. In Oryza sativa subsp. japonica (Rice), this protein is Beta-glucosidase 22 (BGLU22).